The following is a 35-amino-acid chain: uncharacterized protein (35 aa).

Residues 10-30 (LMITASFFAIFIIIVVSVLLL) traverse the membrane as a helical segment.

The protein localises to the membrane. This is an uncharacterized protein from Salmonella typhimurium (strain LT2 / SGSC1412 / ATCC 700720).